We begin with the raw amino-acid sequence, 209 residues long: Thymidylate kinase (209 aa).

10–17 is an ATP binding site; sequence GLDGAGKS.

Belongs to the thymidylate kinase family.

The catalysed reaction is dTMP + ATP = dTDP + ADP. Phosphorylation of dTMP to form dTDP in both de novo and salvage pathways of dTTP synthesis. This is Thymidylate kinase from Francisella tularensis subsp. novicida (strain U112).